Consider the following 1032-residue polypeptide: Connector enhancer of kinase suppressor of ras 2 (1032 aa).

The SAM domain occupies 11–76 (WSPSQVVDWM…LEAVDLLCAL (66 aa)). Ser-12 carries the phosphoserine modification. Positions 84–178 (NLKTLSHKLN…TIVQQDCTVY (95 aa)) constitute a CRIC domain. Positions 215 to 297 (VIQLANIKPS…GVILTLKKRP (83 aa)) constitute a PDZ domain. Residues 302–515 (TSAPALLKNM…PAHYSLLPSL (214 aa)) form the DUF1170 domain. Residues 324–340 (RSPTSSVATPSSTISTP) show a composition bias toward low complexity. Positions 324–349 (RSPTSSVATPSSTISTPTKRDSSALQ) are disordered. Phosphoserine is present on residues Ser-338 and Ser-390. Disordered stretches follow at residues 480 to 509 (EEYMFQRNSKKDTGKKSKKKGDKSNSPAHY) and 538 to 558 (FQQSSLQHKSKKKNKGAISGK). Residues 545–558 (HKSKKKNKGAISGK) show a composition bias toward basic residues. The PH domain maps to 570-669 (RGDCEGWLWK…WLNRINMLTA (100 aa)). Residues 682–766 (DYWSESDKEE…PIRKTASQRR (85 aa)) form a disordered region. Position 683 is a phosphotyrosine (Tyr-683). Positions 683–693 (YWSESDKEEAD) are enriched in acidic residues. Phosphoserine is present on residues Ser-685 and Ser-687. The segment covering 701-714 (DSPPPPYDTYPRPP) has biased composition (pro residues). The segment covering 730–740 (LSSTETSQSQS) has biased composition (low complexity). Phosphoserine occurs at positions 756 and 767. The interval 864–900 (ACDPQDDIQPPEVEEEEEEEEEEAAGENVGEKNENRE) is disordered. A coiled-coil region spans residues 874–917 (PEVEEEEEEEEEEAAGENVGEKNENREEKLGDSLQDLYRALEEA). Positions 875–888 (EVEEEEEEEEEEAA) are enriched in acidic residues. Phosphoserine is present on Ser-906.

Belongs to the CNKSR family. Interacts with RAF1, RAB2L and RAL GTPase proteins. Post-translationally, phosphorylated on tyrosine.

It is found in the cytoplasm. The protein localises to the membrane. May function as an adapter protein or regulator of Ras signaling pathways. This is Connector enhancer of kinase suppressor of ras 2 (Cnksr2) from Mus musculus (Mouse).